We begin with the raw amino-acid sequence, 125 residues long: Large ribosomal subunit protein bL12 (125 aa).

It belongs to the bacterial ribosomal protein bL12 family. In terms of assembly, homodimer. Part of the 50S ribosomal subunit; present in 6 copies per ribosome. Forms part of the ribosomal stalk which helps the ribosome interact with GTP-bound translation factors. Forms a heptameric L10(L12)2(L12)2(L12)2 complex, where L10 forms an elongated spine to which 3 L12 dimers bind in a sequential fashion.

Functionally, forms part of the ribosomal stalk which helps the ribosome interact with GTP-bound translation factors. Is thus essential for accurate translation. This chain is Large ribosomal subunit protein bL12, found in Agrobacterium fabrum (strain C58 / ATCC 33970) (Agrobacterium tumefaciens (strain C58)).